The chain runs to 62 residues: Large ribosomal subunit protein bL32 (62 aa).

The segment covering 1–16 (MAVPKRKTSPSRRGMR) has biased composition (basic residues). The disordered stretch occupies residues 1–44 (MAVPKRKTSPSRRGMRRSADALKAPTYVEDKDSGELRRPHHIDL). Positions 28 to 44 (VEDKDSGELRRPHHIDL) are enriched in basic and acidic residues.

Belongs to the bacterial ribosomal protein bL32 family.

The sequence is that of Large ribosomal subunit protein bL32 from Methylorubrum extorquens (strain CM4 / NCIMB 13688) (Methylobacterium extorquens).